Reading from the N-terminus, the 216-residue chain is ATP-dependent Clp protease proteolytic subunit 1 (216 aa).

Ser-119 acts as the Nucleophile in catalysis. The active site involves His-144.

The protein belongs to the peptidase S14 family. In terms of assembly, fourteen ClpP subunits assemble into 2 heptameric rings which stack back to back to give a disk-like structure with a central cavity, resembling the structure of eukaryotic proteasomes.

Its subcellular location is the cytoplasm. It catalyses the reaction Hydrolysis of proteins to small peptides in the presence of ATP and magnesium. alpha-casein is the usual test substrate. In the absence of ATP, only oligopeptides shorter than five residues are hydrolyzed (such as succinyl-Leu-Tyr-|-NHMec, and Leu-Tyr-Leu-|-Tyr-Trp, in which cleavage of the -Tyr-|-Leu- and -Tyr-|-Trp bonds also occurs).. In terms of biological role, cleaves peptides in various proteins in a process that requires ATP hydrolysis. Has a chymotrypsin-like activity. Plays a major role in the degradation of misfolded proteins. The sequence is that of ATP-dependent Clp protease proteolytic subunit 1 from Cutibacterium acnes (strain DSM 16379 / KPA171202) (Propionibacterium acnes).